The following is a 286-amino-acid chain: Centromere protein P (286 aa).

A coiled-coil region spans residues Met-1–Leu-73. Ser-38 bears the Phosphoserine mark.

This sequence belongs to the CENP-P/CTF19 family. Component of the CENPA-CAD complex, composed of CENPI, CENPK, CENPL, CENPO, CENPP, CENPQ, CENPR and CENPS. The CENPA-CAD complex interacts with the CENPA-NAC complex, at least composed of CENPA, CENPC, CENPH, CENPM, CENPN, CENPT and CENPU.

It localises to the nucleus. Its subcellular location is the chromosome. It is found in the centromere. Component of the CENPA-CAD (nucleosome distal) complex, a complex recruited to centromeres which is involved in assembly of kinetochore proteins, mitotic progression and chromosome segregation. May be involved in incorporation of newly synthesized CENPA into centromeres via its interaction with the CENPA-NAC complex. The sequence is that of Centromere protein P (Cenpp) from Mus musculus (Mouse).